The following is a 55-amino-acid chain: Large ribosomal subunit protein bL33 (55 aa).

It belongs to the bacterial ribosomal protein bL33 family.

This Baumannia cicadellinicola subsp. Homalodisca coagulata protein is Large ribosomal subunit protein bL33.